The sequence spans 334 residues: Geranylgeranyl pyrophosphate synthase ltmG (334 aa).

3 residues coordinate isopentenyl diphosphate: Lys53, Arg56, and His85. Residues Asp92 and Asp96 each coordinate Mg(2+). Arg101 contacts dimethylallyl diphosphate. Arg102 contacts isopentenyl diphosphate. Dimethylallyl diphosphate contacts are provided by Lys179, Thr180, and Gln213. Asp216 contributes to the Mg(2+) binding site. Dimethylallyl diphosphate is bound by residues Asn220, Lys230, and Lys240.

The protein belongs to the FPP/GGPP synthase family. Mg(2+) serves as cofactor.

The enzyme catalyses isopentenyl diphosphate + dimethylallyl diphosphate = (2E)-geranyl diphosphate + diphosphate. The catalysed reaction is isopentenyl diphosphate + (2E)-geranyl diphosphate = (2E,6E)-farnesyl diphosphate + diphosphate. It catalyses the reaction isopentenyl diphosphate + (2E,6E)-farnesyl diphosphate = (2E,6E,10E)-geranylgeranyl diphosphate + diphosphate. It participates in secondary metabolite biosynthesis. Functionally, geranylgeranyl pyrophosphate synthase; part of the gene cluster that mediates the biosynthesis of lolitrems, indole-diterpene mycotoxins that are potent tremorgens in mammals, and are synthesized by clavicipitaceous fungal endophytes in association with their grass hosts. The geranylgeranyl diphosphate (GGPP) synthase ltmG is proposed to catalyze the first step in lolitrem biosynthesis. LtmG catalyzes a series of iterative condensations of isopentenyl diphosphate (IPP) with dimethylallyl diphosphate (DMAPP), geranyl diphosphate (GPP), and farnesyl diphosphate (FPP), to form GGPP. GGPP then condenses with indole-3-glycerol phosphate to form 3-geranylgeranylindole, an acyclic intermediate, to be incorporated into paxilline. Either ltmG or ltmC could be responsible for this step, as both are putative prenyl transferases. The FAD-dependent monooxygenase ltmM then catalyzes the epoxidation of the two terminal alkenes of the geranylgeranyl moiety, which is subsequently cyclized by ltmB, to paspaline. The cytochrome P450 monooxygenases ltmQ and ltmP can sequentially oxidize paspaline to terpendole E and terpendole F. Alternatively, ltmP converts paspaline to an intermediate which is oxidized by ltmQ to terpendole F. LtmF, ltmK, ltmE and ltmJ appear to be unique to the epichloe endophytes. The prenyltransferase ltmF is involved in the 27-hydroxyl-O-prenylation. The cytochrome P450 monooxygenase ltmK is required for the oxidative acetal ring formation. The multi-functional prenyltransferase ltmE is required for C20- and C21-prenylations of the indole ring of paspalanes and acts together with the cytochrome P450 monooxygenase ltmJ to yield lolitremanes by multiple oxidations and ring closures. The stereoisomer pairs of lolitriol and lolitrem N or lolitrem B and lolitrem F may be attributed to variations in the way in which ring closure can occur under the action of ltmJ. While the major product of this pathway is lolitrem B, the prenyl transferases and cytochrome P450 monooxygenases identified in this pathway have a remarkable versatility in their regio- and stereo-specificities to generate a diverse range of metabolites that are products of a metabolic grid rather than a linear pathway. In Epichloe festucae (strain Fl1), this protein is Geranylgeranyl pyrophosphate synthase ltmG.